Reading from the N-terminus, the 163-residue chain is ECF RNA polymerase sigma factor SigM (163 aa).

A Polymerase core binding motif is present at residues 30–43 (DLLQETFMRAYIHI). A DNA-binding region (H-T-H motif) is located at residues 127 to 146 (YKEASHIMNISEANFKSVLF).

It belongs to the sigma-70 factor family. ECF subfamily. Interacts with the N-terminus of YhdL, which is probably its anti-sigma factor. Interacts transiently with the RNAP core.

Its function is as follows. Sigma factors are initiation factors that promote the attachment of RNA polymerase (RNAP) to specific initiation sites and are then released. Extracytoplasmic function (ECF) sigma factors are held in an inactive form by a cognate anti-sigma factor (YhdL) until released. This sigma factor is involved in the maintenance of membrane and cell wall integrity in response to environmental stresses including salt, acid, ethanol and antibiotics stress. Partially regulates transcription from a number of genes including disA. Associates with RNAP core under all growth phases. The polypeptide is ECF RNA polymerase sigma factor SigM (sigM) (Bacillus subtilis (strain 168)).